A 183-amino-acid polypeptide reads, in one-letter code: Archaemetzincin (183 aa).

Residue His131 coordinates Zn(2+). Glu132 (proton acceptor) is an active-site residue. Zn(2+)-binding residues include His135, His141, Cys142, Cys147, Cys166, and Cys169.

This sequence belongs to the peptidase M54 family. As to quaternary structure, monomer. Requires Zn(2+) as cofactor.

In terms of biological role, probable zinc metalloprotease whose natural substrate is unknown. This chain is Archaemetzincin, found in Saccharolobus islandicus (strain L.S.2.15 / Lassen #1) (Sulfolobus islandicus).